The chain runs to 172 residues: MERAAKKEAVESLNGLFQTTSVAVVAHYSGLTVAQMQKLRSQMKQAGASVKVSKNRLAKIALEGTDVVAIGSLLKGPTVIATSSDPVAAPKVAVEFAKANEKFVILGGSMGKTVLNVDGVKALASLPSLDELRGKLVGLLVAPATKIAQLTTAPAAKVARVVQAYASKSEAA.

The protein belongs to the universal ribosomal protein uL10 family. In terms of assembly, part of the ribosomal stalk of the 50S ribosomal subunit. The N-terminus interacts with L11 and the large rRNA to form the base of the stalk. The C-terminus forms an elongated spine to which L12 dimers bind in a sequential fashion forming a multimeric L10(L12)X complex.

Its function is as follows. Forms part of the ribosomal stalk, playing a central role in the interaction of the ribosome with GTP-bound translation factors. The sequence is that of Large ribosomal subunit protein uL10 from Rhodopseudomonas palustris (strain BisB5).